A 907-amino-acid chain; its full sequence is Nuclear receptor coactivator 7 (907 aa).

Residues 1–12 show a composition bias toward basic and acidic residues; the sequence is METKEEKKERRQ. Residues 1 to 29 adopt a coiled-coil conformation; it reads METKEEKKERRQGYFARLKKKRQAKQNTE. Disordered stretches follow at residues 1–51, 63–83, and 99–121; these read METK…DDES, DNCK…RKKK, and YSTD…SQKP. Residues 25–41 show a composition bias toward polar residues; that stretch reads KQNTETVSANSPGSPVS. Basic and acidic residues-rich tracts occupy residues 68 to 78 and 99 to 116; these read AGEKETVPEKE and YSTD…EKKM. Positions 125-168 constitute a LysM domain; sequence IEYTAGNQDTINSIALKFNITPNKLVELNKLFTHTIVPGQILFV. 2 disordered regions span residues 335–373 and 401–443; these read LSKE…QSSE and DPHV…MDRG. Basic and acidic residues predominate over residues 401-422; sequence DPHVKEPSEEKNVSDIRTKEDS. One can recognise a TLDc domain in the interval 746–907; that stretch reads ALLENMHIEQ…IQDVEVWTFE (162 aa).

It belongs to the OXR1 family.

The protein resides in the nucleus. Functionally, enhances the transcriptional activities of several nuclear receptors. The chain is Nuclear receptor coactivator 7 (NCOA7) from Gallus gallus (Chicken).